The sequence spans 353 residues: Probable tRNA pseudouridine synthase B (353 aa).

Aspartate 45 serves as the catalytic Nucleophile. One can recognise a PUA domain in the interval 211–287 (YPKIVAKKSA…DHIFVEAKHG (77 aa)). Residues 292–353 (VRDREKDVQR…TGVHRRPGSH (62 aa)) are disordered. The segment covering 309 to 328 (NIRDAAHGPDSRTGRGRKET) has biased composition (basic and acidic residues). The segment covering 336 to 353 (RVRKLQNKTGVHRRPGSH) has biased composition (basic residues).

It belongs to the pseudouridine synthase TruB family. Type 2 subfamily.

It carries out the reaction uridine(55) in tRNA = pseudouridine(55) in tRNA. Functionally, could be responsible for synthesis of pseudouridine from uracil-55 in the psi GC loop of transfer RNAs. The sequence is that of Probable tRNA pseudouridine synthase B from Thermoplasma volcanium (strain ATCC 51530 / DSM 4299 / JCM 9571 / NBRC 15438 / GSS1).